A 347-amino-acid polypeptide reads, in one-letter code: MTIKKYKTALSGMFPEEIQSFCGLKEKFRAQQIFHWIASGVNSFDEMTNLSFDMRSKLKNDFSLFSTKIKEALKDKDGTIKLAVELYDGSVIETVLLTDKAKRKTACVSCQAGCPMKCAFCKTGQIGFLRNLSASEIVEQFLHLEREAGSLDNIVFMGMGEPMLNLPEIDKAINILAHPKGRNLSKRRITISTSGLCKGIYEMADKGPEVRLAVSLTTADETLRSELMPITKTNSLDELKQAIKYFNSKSNKRVTLELALMKGLNTDKKAAQEVIEFAKGLECFINLIPWNPVEGLNFKTPSETEVRTFETYLKKAGLNISTRQKRGQSIGGACGQLGSTAARSNRF.

The Proton acceptor role is filled by E93. The region spanning 100 to 323 (KAKRKTACVS…KKAGLNISTR (224 aa)) is the Radical SAM core domain. C107 and C334 form a disulfide bridge. Residues C114, C118, and C121 each coordinate [4Fe-4S] cluster. Residues 160-161 (GE), S192, 215-217 (SLT), and N291 contribute to the S-adenosyl-L-methionine site. The S-methylcysteine intermediate role is filled by C334.

The protein belongs to the radical SAM superfamily. RlmN family. [4Fe-4S] cluster is required as a cofactor.

It is found in the cytoplasm. The catalysed reaction is adenosine(2503) in 23S rRNA + 2 reduced [2Fe-2S]-[ferredoxin] + 2 S-adenosyl-L-methionine = 2-methyladenosine(2503) in 23S rRNA + 5'-deoxyadenosine + L-methionine + 2 oxidized [2Fe-2S]-[ferredoxin] + S-adenosyl-L-homocysteine. It carries out the reaction adenosine(37) in tRNA + 2 reduced [2Fe-2S]-[ferredoxin] + 2 S-adenosyl-L-methionine = 2-methyladenosine(37) in tRNA + 5'-deoxyadenosine + L-methionine + 2 oxidized [2Fe-2S]-[ferredoxin] + S-adenosyl-L-homocysteine. In terms of biological role, specifically methylates position 2 of adenine 2503 in 23S rRNA and position 2 of adenine 37 in tRNAs. This chain is Probable dual-specificity RNA methyltransferase RlmN, found in Treponema denticola (strain ATCC 35405 / DSM 14222 / CIP 103919 / JCM 8153 / KCTC 15104).